A 224-amino-acid polypeptide reads, in one-letter code: Probable 2' cyclic ADP-D-ribose synthase BdTIR (224 aa).

The TIR domain maps to 51 to 178; it reads SRYEVFINHR…RFKFALREAK (128 aa). Residues 60–65 and G93 contribute to the NAD(+) site; that span reads RGVDTK. Residue E127 is part of the active site.

Homodimer.

It catalyses the reaction NAD(+) + H2O = ADP-D-ribose + nicotinamide + H(+). The enzyme catalyses NADP(+) + H2O = ADP-D-ribose 2'-phosphate + nicotinamide + H(+). The catalysed reaction is NAD(+) = 2'cADPR + nicotinamide + H(+). An NAD(+) hydrolase (NADase). Upon activation catalyzes cleavage of NAD(+) into ADP-D-ribose (ADPR) and nicotinamide; NAD(+) cleavage triggers a defense system that promotes cell death. In addition to ADPR, also generates a cyclization variant of cyclic ADPR termed v-cADPR (2'cADPR). Also hydrolyzes NADP(+), but not other NAD(+)-related molecules. v-cADPR activates ThsA, an NAD(+) hydrolase in B.cereus (AC J8G6Z1). Probably makes 2'cADPR; the cADPR made by this protein is bound by cmTad1 (AC P0DW61) and activates ThsA from B.cereus. Boiling cmTad1 bound to the cyclic nucleotide releases 2'cADPR, strongly suggesting it is the product of this protein. The sequence is that of Probable 2' cyclic ADP-D-ribose synthase BdTIR from Brachypodium distachyon (Purple false brome).